The sequence spans 500 residues: Metacaspase-5 (500 aa).

The signal sequence occupies residues 1–18 (MDAALALLFGQVATAVLP). The important for catalytic activity stretch occupies residues 19–63 (YVVNSIGRVPRPKRVDVKKAMGEAHQCRPVVPYRAPRPYTEGRVK). N-linked (GlcNAc...) asparagine glycosylation is found at Asn70 and Asn113. His147 is a catalytic residue. Residues Asp162, Asp178, and Asp179 each coordinate Ca(2+). Cys202 is an active-site residue. Ca(2+) is bound at residue Asp209. Asn219, Asn235, Asn258, Asn264, Asn283, and Asn332 each carry an N-linked (GlcNAc...) asparagine glycan. 2 disordered regions span residues 358-419 (EATL…QAYY) and 444-500 (QPPQ…PGRK). Residues 379–389 (ASTSNGKSNPG) show a composition bias toward polar residues. A compositionally biased stretch (low complexity) spans 444–461 (QPPQQAYYQPPQQAYYQP).

This sequence belongs to the peptidase C14B family.

The protein localises to the recycling endosome. In terms of biological role, cysteine protease that cleaves specifically after arginine or lysine residues. This is Metacaspase-5 from Trypanosoma brucei brucei.